The sequence spans 525 residues: Cobyric acid synthase (525 aa).

In terms of domain architecture, GATase cobBQ-type spans 251–452 (ELEIAVLYLP…FHGIFDNDLL (202 aa)). Cys-332 functions as the Nucleophile in the catalytic mechanism. The active site involves His-444.

The protein belongs to the CobB/CobQ family. CobQ subfamily.

Its pathway is cofactor biosynthesis; adenosylcobalamin biosynthesis. Functionally, catalyzes amidations at positions B, D, E, and G on adenosylcobyrinic A,C-diamide. NH(2) groups are provided by glutamine, and one molecule of ATP is hydrogenolyzed for each amidation. This is Cobyric acid synthase from Pelotomaculum thermopropionicum (strain DSM 13744 / JCM 10971 / SI).